A 149-amino-acid polypeptide reads, in one-letter code: Calmodulin (149 aa).

Ala2 carries the N-acetylalanine modification. 4 EF-hand domains span residues 8–43, 44–79, 81–116, and 117–149; these read EQIA…LGQN, PTEA…KMKD, DSEE…LGEK, and LTDE…MMAK. The Ca(2+) site is built by Asp21, Asp23, Asp25, Ser27, Glu32, Asp57, Asp59, Asn61, Thr63, Glu68, Asp94, Asp96, Asn98, Tyr100, and Asp105. Position 116 is an N6,N6,N6-trimethyllysine (Lys116). Residues Asp130, Asp132, Asp134, Gln136, and Glu141 each coordinate Ca(2+).

This sequence belongs to the calmodulin family.

Calmodulin mediates the control of a large number of enzymes, ion channels and other proteins by Ca(2+). Among the enzymes to be stimulated by the calmodulin-Ca(2+) complex are a number of protein kinases and phosphatases. The polypeptide is Calmodulin (Mougeotia scalaris (Green alga)).